The chain runs to 1275 residues: Rho1 guanine nucleotide exchange factor 3 (1275 aa).

Disordered stretches follow at residues 1–42, 56–113, 131–188, and 214–248; these read MKLS…SFQK, SPPF…NSAA, NNPL…SPYS, and LSPT…VEYL. The segment covering 7–17 has biased composition (basic and acidic residues); it reads LFHRSSKDHGG. Composition is skewed to polar residues over residues 32-42, 80-113, and 142-151; these read PHSSSPPSFQK, ASIN…NSAA, and SPGNKQNTVD. Low complexity-rich tracts occupy residues 178 to 188 and 214 to 228; these read SSVSSHSSPYS and LSPT…SPIR. Ser293 carries the post-translational modification Phosphoserine. In terms of domain architecture, DH spans 465 to 657; it reads ARQNNIHELI…RATCEECDAV (193 aa). A PH domain is found at 692-855; it reads EFFFEGIVQR…WVEKINVAKK (164 aa). The CNH domain occupies 930–1239; that stretch reads YGDISCIAQF…KYYPSNSDWL (310 aa).

Its subcellular location is the cytoplasm. Functionally, stimulates the exchange of Rho1 GDP-bound form into GTP-bound form. Regulates, via interaction and activation of Rho1, beta-1,3-glucan biosynthesis and cell wall integrity during septation. Involved in the regulation of contractile ring assembly. The sequence is that of Rho1 guanine nucleotide exchange factor 3 (rgf3) from Schizosaccharomyces pombe (strain 972 / ATCC 24843) (Fission yeast).